We begin with the raw amino-acid sequence, 216 residues long: MQKFTLLKGLVAPMDRENVDTDAIIPKQFLKSIRKTGFGQNLFDEWRYLDAGFPGQDPKSRKPNPDFVLNQPRYQGASILLARKNFGCGSSREHAPWALDQYGFRAIIAPSYADIFFNNSFKNGLLPIVLSEIQVSQLFDEAAAFPGYALTIDLERQVIIKPDGKELPFEVQAFRKYCLLNGFDDIGLTLRQADKIKAFEAQRLAQKPWLARTLLA.

It belongs to the LeuD family. LeuD type 1 subfamily. In terms of assembly, heterodimer of LeuC and LeuD.

It carries out the reaction (2R,3S)-3-isopropylmalate = (2S)-2-isopropylmalate. The protein operates within amino-acid biosynthesis; L-leucine biosynthesis; L-leucine from 3-methyl-2-oxobutanoate: step 2/4. Its function is as follows. Catalyzes the isomerization between 2-isopropylmalate and 3-isopropylmalate, via the formation of 2-isopropylmaleate. In Albidiferax ferrireducens (strain ATCC BAA-621 / DSM 15236 / T118) (Rhodoferax ferrireducens), this protein is 3-isopropylmalate dehydratase small subunit.